A 231-amino-acid chain; its full sequence is Probable septum site-determining protein MinC (231 aa).

Belongs to the MinC family. As to quaternary structure, interacts with MinD and FtsZ.

In terms of biological role, cell division inhibitor that blocks the formation of polar Z ring septums. Rapidly oscillates between the poles of the cell to destabilize FtsZ filaments that have formed before they mature into polar Z rings. Prevents FtsZ polymerization. The polypeptide is Probable septum site-determining protein MinC (Baumannia cicadellinicola subsp. Homalodisca coagulata).